Reading from the N-terminus, the 505-residue chain is MSEYILEMRNITKEFPGVKALDNVNFKVKRGEIHALVGENGAGKSTLMKILSGVYPYGTYKGDIIIDGEVKQFRNIKDSEKSGIAIIYQELTLVKYMTVGENIFLGEEPVKGGIIDWMKVYSETYRLLKELQINVNPYTKVMNLGIGHQQMVEIAKALSKKARILILDEPTSALTESETEHLLNILKDLKKNGVTCIYISHKLNEVFEIADSITVLRDGKTIMTDKKENFTENKVISLMVGRELTQRFPRAKHTPGEVVFEVKNYTVYDHEIPGKKIIDNVSFKARRGEILGIAGLMGAGRTELAASIFGAFKGRKEGEIYLNGKKIEINTPSDAIKHGIAYLSEDRKRFGLVTLMDVQENIALPNYDRLSKFSIINNNAKIKHAEKYVKELKIKTPTIRQRVANLSGGNQQKVVIAKWLMSDPKVLILDEPTRGIDVGAKFEIYNLMNKLVDMGVCVIMISSELPEILGMSDRILVIHEGKINGEFPIEEADQEKIMYCATGGK.

ABC transporter domains are found at residues 6 to 243 (LEMR…VGRE) and 262 to 505 (VKNY…TGGK). 38–45 (GENGAGKS) is a binding site for ATP.

Belongs to the ABC transporter superfamily. Xylose importer (TC 3.A.1.2.4) family. The complex is composed of two ATP-binding proteins (XylG), two transmembrane proteins (XylH) and a solute-binding protein (XylF).

It localises to the cell membrane. The catalysed reaction is D-xylose(out) + ATP + H2O = D-xylose(in) + ADP + phosphate + H(+). Part of the ABC transporter complex XylFGH involved in xylose import. Responsible for energy coupling to the transport system. This Thermoanaerobacter pseudethanolicus (strain ATCC 33223 / 39E) (Clostridium thermohydrosulfuricum) protein is Xylose import ATP-binding protein XylG.